Consider the following 474-residue polypeptide: Chromosomal replication initiator protein DnaA (474 aa).

The domain I, interacts with DnaA modulators stretch occupies residues 1-90 (MSSSLWLQCL…RQVVVPSSQI (90 aa)). Residues 91-137 (IAPAAPAVTLAPRPLPATRILQDDAPSRSWEPAPSPVQPESKSGYRS) form a domain II region. The interval 112 to 137 (QDDAPSRSWEPAPSPVQPESKSGYRS) is disordered. A compositionally biased stretch (polar residues) spans 128–137 (QPESKSGYRS). The domain III, AAA+ region stretch occupies residues 138–354 (NVNPKHNFNN…GALNRVIANA (217 aa)). The ATP site is built by Gly-182, Gly-184, Lys-185, and Thr-186. Residues 355 to 474 (NFTGRAITID…YSNLIRTLST (120 aa)) are domain IV, binds dsDNA.

The protein belongs to the DnaA family. Oligomerizes as a right-handed, spiral filament on DNA at oriC.

The protein resides in the cytoplasm. Functionally, plays an essential role in the initiation and regulation of chromosomal replication. ATP-DnaA binds to the origin of replication (oriC) to initiate formation of the DNA replication initiation complex once per cell cycle. Binds the DnaA box (a 9 base pair repeat at the origin) and separates the double-stranded (ds)DNA. Forms a right-handed helical filament on oriC DNA; dsDNA binds to the exterior of the filament while single-stranded (ss)DNA is stabiized in the filament's interior. The ATP-DnaA-oriC complex binds and stabilizes one strand of the AT-rich DNA unwinding element (DUE), permitting loading of DNA polymerase. After initiation quickly degrades to an ADP-DnaA complex that is not apt for DNA replication. Binds acidic phospholipids. This is Chromosomal replication initiator protein DnaA from Photobacterium profundum (strain SS9).